Consider the following 1001-residue polypeptide: Phosphoenolpyruvate carboxylase (1001 aa).

Catalysis depends on residues His-189 and Lys-642.

The protein belongs to the PEPCase type 1 family. The cofactor is Mg(2+).

It catalyses the reaction oxaloacetate + phosphate = phosphoenolpyruvate + hydrogencarbonate. Functionally, forms oxaloacetate, a four-carbon dicarboxylic acid source for the tricarboxylic acid cycle. In Prochlorococcus marinus (strain SARG / CCMP1375 / SS120), this protein is Phosphoenolpyruvate carboxylase.